We begin with the raw amino-acid sequence, 195 residues long: Interferon tau-5 (195 aa).

The first 23 residues, 1–23 (MAFVLSLLMALVLVSYGPGGSLG), serve as a signal peptide directing secretion. 2 cysteine pairs are disulfide-bonded: Cys-24–Cys-122 and Cys-52–Cys-162.

This sequence belongs to the alpha/beta interferon family. IFN-alphaII subfamily. As to expression, constitutively and exclusively expressed in the mononuclear cells of the extraembryonic trophectoderm.

It localises to the secreted. Paracrine hormone primarily responsible for maternal recognition of pregnancy. Interacts with endometrial receptors, probably type I interferon receptors, and blocks estrogen receptor expression, preventing the estrogen-induced increase in oxytocin receptor expression in the endometrium. This results in the suppression of the pulsatile endometrial release of the luteolytic hormone prostaglandin F2-alpha, hindering the regression of the corpus luteum (luteolysis) and therefore a return to ovarian cyclicity. This, and a possible direct effect of IFN-tau on prostaglandin synthesis, leads in turn to continued ovarian progesterone secretion, which stimulates the secretion by the endometrium of the nutrients required for the growth of the conceptus. In summary, displays particularly high antiviral and antiproliferative potency concurrently with particular weak cytotoxicity, high antiluteolytic activity and immunomodulatory properties. In contrast with other IFNs, IFN-tau is not virally inducible. This Ovis aries (Sheep) protein is Interferon tau-5 (IFNT5).